The chain runs to 130 residues: Large ribosomal subunit protein bL20c (130 aa).

The protein belongs to the bacterial ribosomal protein bL20 family.

The protein localises to the plastid. It is found in the chloroplast. Functionally, binds directly to 23S ribosomal RNA and is necessary for the in vitro assembly process of the 50S ribosomal subunit. It is not involved in the protein synthesizing functions of that subunit. The chain is Large ribosomal subunit protein bL20c from Oenothera argillicola (Appalachian evening primrose).